Reading from the N-terminus, the 129-residue chain is Small ribosomal subunit protein uS11 (129 aa).

Belongs to the universal ribosomal protein uS11 family. Part of the 30S ribosomal subunit. Interacts with proteins S7 and S18. Binds to IF-3.

In terms of biological role, located on the platform of the 30S subunit, it bridges several disparate RNA helices of the 16S rRNA. Forms part of the Shine-Dalgarno cleft in the 70S ribosome. This Erythrobacter litoralis (strain HTCC2594) protein is Small ribosomal subunit protein uS11.